A 1050-amino-acid chain; its full sequence is Probable beta-glucosidase E (1050 aa).

The tract at residues 1 to 87 (MPPPDSNPGS…RSSSTNGGHN (87 aa)) is disordered. Topologically, residues 1–174 (MPPPDSNPGS…VKYARIWRRT (174 aa)) are cytoplasmic. Over residues 11–20 (FRDHLKHDNK) the composition is skewed to basic and acidic residues. Residues 47-56 (SPRSASASSS) show a composition bias toward low complexity. Residues 78–87 (RSSSTNGGHN) show a composition bias toward polar residues. Residues 175 to 195 (LVVVIVALALLVWGFLRFTAA) traverse the membrane as a helical; Signal-anchor for type II membrane protein segment. At 196–1050 (QRQGPKVWPM…SRDLPLQAKY (855 aa)) the chain is on the extracellular side. 4 N-linked (GlcNAc...) asparagine glycosylation sites follow: Asn236, Asn244, Asn300, and Asn430. The active site involves Asp458. N-linked (GlcNAc...) asparagine glycans are attached at residues Asn501, Asn540, Asn605, Asn884, Asn920, Asn929, and Asn993.

It belongs to the glycosyl hydrolase 3 family.

The protein resides in the cell membrane. The enzyme catalyses Hydrolysis of terminal, non-reducing beta-D-glucosyl residues with release of beta-D-glucose.. The protein operates within glycan metabolism; cellulose degradation. In terms of biological role, beta-glucosidases are one of a number of cellulolytic enzymes involved in the degradation of cellulosic biomass. Catalyzes the last step releasing glucose from the inhibitory cellobiose. In Aspergillus clavatus (strain ATCC 1007 / CBS 513.65 / DSM 816 / NCTC 3887 / NRRL 1 / QM 1276 / 107), this protein is Probable beta-glucosidase E (bglE).